The sequence spans 214 residues: Superoxide dismutase [Mn] (214 aa).

Residues His-27, His-82, Asp-169, and His-173 each contribute to the Mn(2+) site.

Belongs to the iron/manganese superoxide dismutase family. Homodimer. Requires Mn(2+) as cofactor.

It carries out the reaction 2 superoxide + 2 H(+) = H2O2 + O2. Functionally, destroys superoxide anion radicals which are normally produced within the cells and which are toxic to biological systems. This is Superoxide dismutase [Mn] (sodA) from Pasteurella multocida (strain Pm70).